Here is a 370-residue protein sequence, read N- to C-terminus: ECF RNA polymerase sigma factor SigG (370 aa).

A sigma-70 factor domain-2 region spans residues 63–129 (EPYRRELLAH…LTALEGRRRR (67 aa)). A Polymerase core binding motif is present at residues 85–88 (DLVQ). Residues 180 to 232 (LAFVAALQHLSPRQRAVLLLRDVLQWKSAEVADAIGTSTVAVNSLLQRARSQL) are sigma-70 factor domain-4. The H-T-H motif DNA-binding region spans 207-226 (SAEVADAIGTSTVAVNSLLQ).

The protein belongs to the sigma-70 factor family. ECF subfamily. Interacts transiently with the RNA polymerase catalytic core formed by RpoA, RpoB, RpoC and RpoZ (2 alpha, 1 beta, 1 beta' and 1 omega subunit) to form the RNA polymerase holoenzyme that can initiate transcription.

Its function is as follows. Sigma factors are initiation factors that promote the attachment of RNA polymerase to specific initiation sites and are then released. Extracytoplasmic function (ECF) sigma factors are held in an inactive form by a cognate anti-sigma factor until released, although no anti-sigma factor is known for this protein. May be involved in host intracellular survival after infection (strains H37Rv and CDC 1551). A role in the SOS response is controversial; it has been seen in strain CDC 1551 but not in H37Rv. This chain is ECF RNA polymerase sigma factor SigG (sigG), found in Mycobacterium tuberculosis (strain CDC 1551 / Oshkosh).